Reading from the N-terminus, the 36-residue chain is MNQLGSGPTKQGVATNTGSTGTTKNNSNLSGKGWVL.

Over residues methionine 1–alanine 14 the composition is skewed to polar residues. Positions methionine 1–leucine 36 are disordered. Residues threonine 15–leucine 36 show a composition bias toward low complexity.

This is an uncharacterized protein from Dictyostelium discoideum (Social amoeba).